A 349-amino-acid chain; its full sequence is DNA replication and repair protein RecF (349 aa).

30 to 37 (GKNGSGKT) is a binding site for ATP.

It belongs to the RecF family.

It is found in the cytoplasm. In terms of biological role, the RecF protein is involved in DNA metabolism; it is required for DNA replication and normal SOS inducibility. RecF binds preferentially to single-stranded, linear DNA. It also seems to bind ATP. The protein is DNA replication and repair protein RecF of Francisella tularensis subsp. mediasiatica (strain FSC147).